The primary structure comprises 538 residues: Fusion glycoprotein F0 (538 aa).

The signal sequence occupies residues 1–19 (MKVFLVTCLGFAVFSSSVC). The Extracellular segment spans residues 20 to 486 (VNINILQQIG…VNVNSKIGAI (467 aa)). 2 N-linked (GlcNAc...) asparagine; by host glycosylation sites follow: N56 and N73. The fusion peptide stretch occupies residues 103–127 (FAGIAIGIAALGVATAAQVTAAVSL). Positions 128–156 (VQAQTNARAIAAMKNSIQATNRAVFEVKE) form a coiled coil. A glycan (N-linked (GlcNAc...) asparagine; by host) is linked at N182. Disulfide bonds link C324–C333, C348–C356, C380–C385, and C387–C410. N-linked (GlcNAc...) asparagine; by host glycosylation is present at N352. N427, N433, and N457 each carry an N-linked (GlcNAc...) asparagine; by host glycan. Residues 452–477 (ELSKVNASLQNAVKYIKESNHQLQSV) adopt a coiled-coil conformation. A helical membrane pass occupies residues 487–507 (IVAALVLSILSIIISLLFCCW). Residues 508-538 (AYVATKEIRRINFKTNHINTISSSVDDLIRY) lie on the Cytoplasmic side of the membrane.

This sequence belongs to the paramyxoviruses fusion glycoprotein family. Homotrimer; disulfide-linked F1-F2. Interacts with host LAMP1; LAMP2 and LAMP3; these interactions promote the cleavage of the viral fusion protein F. In terms of processing, the inactive precursor F0 is glycosylated and proteolytically cleaved into F1 and F2 to be functionally active. The cleavage is mediated by cellular proteases including host FURIN during the transport and maturation of the polypeptide.

It localises to the virion membrane. The protein resides in the host cell membrane. Class I viral fusion protein. Under the current model, the protein has at least 3 conformational states: pre-fusion native state, pre-hairpin intermediate state, and post-fusion hairpin state. During viral and plasma cell membrane fusion, the heptad repeat (HR) regions assume a trimer-of-hairpins structure, positioning the fusion peptide in close proximity to the C-terminal region of the ectodomain. The formation of this structure appears to drive apposition and subsequent fusion of viral and plasma cell membranes. Directs fusion of viral and cellular membranes leading to delivery of the nucleocapsid into the cytoplasm. This fusion is pH independent and occurs directly at the outer cell membrane. The trimer of F1-F2 (F protein) probably interacts with HN at the virion surface. Upon HN binding to its cellular receptor, the hydrophobic fusion peptide is unmasked and interacts with the cellular membrane, inducing the fusion between cell and virion membranes. Later in infection, F proteins expressed at the plasma membrane of infected cells could mediate fusion with adjacent cells to form syncytia, a cytopathic effect that could lead to tissue necrosis. This is Fusion glycoprotein F0 (F) from Mumps virus genotype B (strain Miyahara vaccine) (MuV).